A 1400-amino-acid chain; its full sequence is DNA-directed RNA polymerase subunit beta' (1400 aa).

Cys-71, Cys-73, Cys-86, and Cys-89 together coordinate Zn(2+). Mg(2+)-binding residues include Asp-462, Asp-464, and Asp-466. Positions 811, 885, 892, and 895 each coordinate Zn(2+).

The protein belongs to the RNA polymerase beta' chain family. The RNAP catalytic core consists of 2 alpha, 1 beta, 1 beta' and 1 omega subunit. When a sigma factor is associated with the core the holoenzyme is formed, which can initiate transcription. It depends on Mg(2+) as a cofactor. The cofactor is Zn(2+).

It catalyses the reaction RNA(n) + a ribonucleoside 5'-triphosphate = RNA(n+1) + diphosphate. Functionally, DNA-dependent RNA polymerase catalyzes the transcription of DNA into RNA using the four ribonucleoside triphosphates as substrates. The chain is DNA-directed RNA polymerase subunit beta' from Brucella abortus (strain S19).